Consider the following 478-residue polypeptide: MSDAPPQPENEQECMCTQDKVLQFLNKMADESGIKDLTDPALAEFLSDSDALKEIRDLFHYPKAGTLPDADPSLVDPESDSIYLCGNSLGLMPKATGEVMKDHLDKWAKMGVFGHMSGEVPWAHCDEYCLEGVGRLVGAKKEEVSVCNSLTVNIHVLLTSFYKPTETRHKILLESKAFPSDHYAIESQIRLKGRTVQDSMVCLEPREGEETLRTEDILDYIEKNGDEIAIVFFSGIQYYTGQLFDMRAITEAGHRKGCFVGFDLAHAFANVPLHLHWWDVDFACWCSYKYGCTGAGSIGGLFVHERFLNDQRERMLGWWSHKMSSRFVMDNVLDLDEGAAGYRISNPPIHTVAAMLGSLKVFDQVSLENLRSRSCYLTGYLEYLVKTLFGENSEQRTTKLSISIITPEEFHQRGCQLSLKFSSPIDIIYPELVKRGCAVDKRYPNVIRVAPVHLYNNYVDIRRFISVLQEVAHIVESE.

Residues L150, T151, 178–181, S234, D263, H266, and Y288 each bind pyridoxal 5'-phosphate; that span reads FPSD. Residue K289 is modified to N6-(pyridoxal phosphate)lysine. Pyridoxal 5'-phosphate is bound by residues W318 and N346.

This sequence belongs to the kynureninase family. Homodimer. Pyridoxal 5'-phosphate is required as a cofactor.

Its subcellular location is the cytoplasm. It catalyses the reaction L-kynurenine + H2O = anthranilate + L-alanine + H(+). The catalysed reaction is 3-hydroxy-L-kynurenine + H2O = 3-hydroxyanthranilate + L-alanine + H(+). Its pathway is amino-acid degradation; L-kynurenine degradation; L-alanine and anthranilate from L-kynurenine: step 1/1. The protein operates within cofactor biosynthesis; NAD(+) biosynthesis; quinolinate from L-kynurenine: step 2/3. Catalyzes the cleavage of L-kynurenine (L-Kyn) and L-3-hydroxykynurenine (L-3OHKyn) into anthranilic acid (AA) and 3-hydroxyanthranilic acid (3-OHAA), respectively. In Caenorhabditis elegans, this protein is Kynureninase.